The chain runs to 216 residues: uncharacterized protein (216 aa).

6 consecutive transmembrane segments (helical) span residues 12-32 (YVLG…FVLA), 48-68 (GVFL…ASLL), 74-94 (LFIG…VGML), 134-154 (ILFF…YPGL), 156-176 (FLVL…FLIF), and 191-211 (LAAG…VKLA).

The protein belongs to the Rht family.

It is found in the cell membrane. This is an uncharacterized protein from Pseudomonas aeruginosa (strain ATCC 15692 / DSM 22644 / CIP 104116 / JCM 14847 / LMG 12228 / 1C / PRS 101 / PAO1).